The chain runs to 364 residues: UDP-3-O-acylglucosamine N-acyltransferase (364 aa).

Catalysis depends on His-258, which acts as the Proton acceptor.

Belongs to the transferase hexapeptide repeat family. LpxD subfamily. Homotrimer.

It catalyses the reaction a UDP-3-O-[(3R)-3-hydroxyacyl]-alpha-D-glucosamine + a (3R)-hydroxyacyl-[ACP] = a UDP-2-N,3-O-bis[(3R)-3-hydroxyacyl]-alpha-D-glucosamine + holo-[ACP] + H(+). It participates in bacterial outer membrane biogenesis; LPS lipid A biosynthesis. Functionally, catalyzes the N-acylation of UDP-3-O-acylglucosamine using 3-hydroxyacyl-ACP as the acyl donor. Is involved in the biosynthesis of lipid A, a phosphorylated glycolipid that anchors the lipopolysaccharide to the outer membrane of the cell. The polypeptide is UDP-3-O-acylglucosamine N-acyltransferase (Burkholderia orbicola (strain MC0-3)).